The following is a 100-amino-acid chain: UPF0235 protein NE0395 (100 aa).

The protein belongs to the UPF0235 family.

This Nitrosomonas europaea (strain ATCC 19718 / CIP 103999 / KCTC 2705 / NBRC 14298) protein is UPF0235 protein NE0395.